We begin with the raw amino-acid sequence, 428 residues long: Putative zinc metalloprotease LL2128 (428 aa).

His19 lines the Zn(2+) pocket. Glu20 is an active-site residue. His23 contributes to the Zn(2+) binding site. 3 consecutive transmembrane segments (helical) span residues 188–210, 354–376, and 401–423; these read GPLN…QGGV, IVYL…IPVL, and IITM…NDIL. The PDZ domain maps to 188–282; the sequence is GPLNNFILGI…SETLSVTPKK (95 aa).

It belongs to the peptidase M50B family. Zn(2+) is required as a cofactor.

Its subcellular location is the cell membrane. This chain is Putative zinc metalloprotease LL2128, found in Lactococcus lactis subsp. lactis (strain IL1403) (Streptococcus lactis).